The chain runs to 932 residues: DNA mismatch repair protein MutS (932 aa).

Glycine 615–serine 622 lines the ATP pocket.

It belongs to the DNA mismatch repair MutS family.

Its function is as follows. This protein is involved in the repair of mismatches in DNA. It is possible that it carries out the mismatch recognition step. This protein has a weak ATPase activity. The chain is DNA mismatch repair protein MutS from Clostridium botulinum (strain Hall / ATCC 3502 / NCTC 13319 / Type A).